The sequence spans 152 residues: 3-hydroxyacyl-[acyl-carrier-protein] dehydratase FabZ (152 aa).

Residue His-54 is part of the active site.

It belongs to the thioester dehydratase family. FabZ subfamily.

Its subcellular location is the cytoplasm. The enzyme catalyses a (3R)-hydroxyacyl-[ACP] = a (2E)-enoyl-[ACP] + H2O. Its function is as follows. Involved in unsaturated fatty acids biosynthesis. Catalyzes the dehydration of short chain beta-hydroxyacyl-ACPs and long chain saturated and unsaturated beta-hydroxyacyl-ACPs. The chain is 3-hydroxyacyl-[acyl-carrier-protein] dehydratase FabZ from Buchnera aphidicola subsp. Schizaphis graminum (strain Sg).